Here is a 1080-residue protein sequence, read N- to C-terminus: MHIIKPSWLRHSGEQKDFEVYSCHISPDGSRLATAGGDGHVRVWSTKAIFNADHPDHGKPRQLCHMSHHLGTIHSVRFSPNGRYLASGADDRVICIYQLDSNPPSHTATFGTNEPPPVENWKTHKRLVGHDSDVQDLAWSYDNSILVSVGLDSKVVVWSGHTFEKLKTIAVHQSHVKGITFDPANKFFATAGDDRHIKIFRFTPPPPNATQHDMVNNFVLETTISAPFKSSPLTTYFRRCSWSPDGNHIAAANAVNGPVSSVAIIERSRWDSEINLIGHEGPTEVCMFSPRLFHTQKPSDNATDKGSPGLVTVIASAGQDKTLSIWNTNTSRPVVILQDVASKSMSDLAWTPDGQTLFASSLDGTILAVKFEMGELGWVATAEENDKALQKYGGSRKGMGTAEDVDGLHLENHSKEGELRGAESRMGALMGDFQPEDKGKPVTTNGSRPTAKNGEANGTTEPKEKEAPKAAPAEENVEKTAERIAELKSRVQVTKDGKKRVAPLLVSSSATGLLSLPQSQLVGAKSTKTTQSDTPQTILDLSKPSHGLPRGGIAAMLLGNKRKAAAMEGEEEDELAGRRPSAGPVPILIDTPEGLEPAPLSAPAQGVVPTPEYLRPAVISPAISFSQTRLAVPKVRSHIVRPLEKGVLQGESTLDEASKVPENIVLEAKNPIRLREPAHISASKRGARLWQDYLPRAIILVTGNKHFWAAACEDGSVHTWTPAGRRLLNGIILESQPVILESREHWLLCITSVGLCHVFNIKTMSAAHPPVSLAPILDIAITSLSLEGPTPAPGVTSAHLNSVGAVVVTLSNGDGFYYSSTMYAWQRLSESWWALGSQYWNSNDSSISALSTTAVGPVTAKNINGTASSTTTTTTPDKPDTAATAEVGVSAGIIPHLERHTTSEFLLKGRAFTLQRLIKTLLSKDGFEGFESTVSVAHLENRIAGALALGAREEFRLYLFMYAKRIGAEGLRGKVEELLNCLVGGLLQQKGAPTNGGGGSGEAKGWFGKGEMLGGWERRELLKGVVLILGKFRDLQRLTVQYARILGLTADGEDEENDDNNGGGGGENGAVAEEMELEEQ.

7 WD repeats span residues 15 to 54, 68 to 107, 129 to 168, 171 to 210, 232 to 275, 278 to 336, and 340 to 381; these read QKDFEVYSCHISPDGSRLATAGGDGHVRVWSTKAIFNADH, HHLGTIHSVRFSPNGRYLASGADDRVICIYQLDSNPPSHT, GHDSDVQDLAWSYDNSILVSVGLDSKVVVWSGHTFEKLKT, VHQSHVKGITFDPANKFFATAGDDRHIKIFRFTPPPPNAT, PLTT…SEIN, GHEG…PVVI, and VASK…WVAT. Disordered regions lie at residues 430–479, 520–546, and 1051–1080; these read MGDF…NVEK, QLVGAKSTKTTQSDTPQTILDLSKPSH, and DGEDEENDDNNGGGGGENGAVAEEMELEEQ. A compositionally biased stretch (polar residues) spans 442–460; the sequence is VTTNGSRPTAKNGEANGTT. Positions 469 to 496 form a coiled coil; it reads KAAPAEENVEKTAERIAELKSRVQVTKD. The span at 520–539 shows a compositional bias: polar residues; the sequence is QLVGAKSTKTTQSDTPQTIL.

It belongs to the WD repeat HIR1 family.

It is found in the nucleus. In terms of biological role, required for replication-independent chromatin assembly and for the periodic repression of histone gene transcription during the cell cycle. This Chaetomium globosum (strain ATCC 6205 / CBS 148.51 / DSM 1962 / NBRC 6347 / NRRL 1970) (Soil fungus) protein is Protein HIR1 (HIR1).